The chain runs to 685 residues: RING finger protein 145 (685 aa).

13 helical membrane-spanning segments follow: residues 53–73, 77–97, 123–143, 151–171, 174–194, 225–245, 275–295, 316–336, 340–360, 384–404, 410–430, 460–480, and 482–502; these read YIAL…LTLP, LVQL…HQLS, FTTA…VMQT, AHLL…IVFI, FAMI…LLVP, LVLP…QIYT, YSLL…LTLC, TEGI…LQVI, FLLS…MLEI, SLCL…CQFF, LLII…TLLI, LLEF…TLFG, and WTVM…WLRA. Residues 537–575 form an RING-type; atypical zinc finger; that stretch reads CSICFQDMKSAVITPCSHFFHAACLKKWLYVQETCPLCH. Residues 582–685 form a disordered region; sequence LQPTSSPGTP…VSTSDVNCAS (104 aa). Positions 583-602 are enriched in low complexity; the sequence is QPTSSPGTPTQGTPAANQNP. Residues 620–631 are compositionally biased toward basic and acidic residues; it reads EGIRAEEMKTSA.

Its subcellular location is the membrane. The protein is RING finger protein 145 (rnf145) of Danio rerio (Zebrafish).